The sequence spans 682 residues: Heat shock 70 kDa protein 9, mitochondrial (682 aa).

A mitochondrion-targeting transit peptide spans Met1–Cys46. Residues Ser640 to Lys682 are disordered. Over residues Gly651 to Thr663 the composition is skewed to gly residues.

It belongs to the heat shock protein 70 (TC 1.A.33) family. DnaK subfamily. As to quaternary structure, interacts with HSCB.

Its subcellular location is the mitochondrion. It is found in the cytoplasm. The protein resides in the cytosol. In terms of biological role, chaperone involved in the maturation of iron-sulfur [Fe-S] cluster-containing proteins. Has a low intrinsic ATPase activity which is markedly stimulated by HSCB and ISU1. In cooperation with other chaperones, Hsp70s are key components that facilitate folding of de novo synthesized proteins, assist translocation of precursor proteins into organelles, and are responsible for degradation of damaged protein under stress conditions. This Arabidopsis thaliana (Mouse-ear cress) protein is Heat shock 70 kDa protein 9, mitochondrial.